The primary structure comprises 91 residues: Small ribosomal subunit protein uS19 (91 aa).

This sequence belongs to the universal ribosomal protein uS19 family.

Functionally, protein S19 forms a complex with S13 that binds strongly to the 16S ribosomal RNA. The chain is Small ribosomal subunit protein uS19 from Cupriavidus necator (strain ATCC 17699 / DSM 428 / KCTC 22496 / NCIMB 10442 / H16 / Stanier 337) (Ralstonia eutropha).